A 397-amino-acid polypeptide reads, in one-letter code: Proteasome-activating nucleotidase (397 aa).

A coiled-coil region spans residues 15-58; it reads DYVTFLKRRIRQLELQVRTLEADKERLERELSRLRMEMSRLRQP. ATP is bound by residues 182-187 and histidine 321; that span reads GCGKTL. Positions 395-397 are docks into pockets in the proteasome alpha-ring to cause gate opening; that stretch reads MYG.

This sequence belongs to the AAA ATPase family. In terms of assembly, homohexamer. The hexameric complex has a two-ring architecture resembling a top hat that caps the 20S proteasome core at one or both ends. Upon ATP-binding, the C-terminus of PAN interacts with the alpha-rings of the proteasome core by binding to the intersubunit pockets.

It localises to the cytoplasm. ATPase which is responsible for recognizing, binding, unfolding and translocation of substrate proteins into the archaeal 20S proteasome core particle. Is essential for opening the gate of the 20S proteasome via an interaction with its C-terminus, thereby allowing substrate entry and access to the site of proteolysis. Thus, the C-termini of the proteasomal ATPase function like a 'key in a lock' to induce gate opening and therefore regulate proteolysis. Unfolding activity requires energy from ATP hydrolysis, whereas ATP binding alone promotes ATPase-20S proteasome association which triggers gate opening, and supports translocation of unfolded substrates. The protein is Proteasome-activating nucleotidase of Thermococcus kodakarensis (strain ATCC BAA-918 / JCM 12380 / KOD1) (Pyrococcus kodakaraensis (strain KOD1)).